Reading from the N-terminus, the 113-residue chain is UPF0321 protein C569.02c (113 aa).

Positions 1 to 17 (MLLLFCICCAFIKLVLA) are cleaved as a signal peptide. N-linked (GlcNAc...) asparagine glycans are attached at residues asparagine 20, asparagine 39, and asparagine 65.

The protein belongs to the UPF0321 family.

The polypeptide is UPF0321 protein C569.02c (Schizosaccharomyces pombe (strain 972 / ATCC 24843) (Fission yeast)).